Consider the following 347-residue polypeptide: DNA-directed RNA polymerase subunit alpha (347 aa).

The tract at residues 1 to 226 (MLISQRPTLS…ELFGLARELN (226 aa)) is alpha N-terminal domain (alpha-NTD). Residues 241-347 (ADHIASFALP…DQDYAETEQL (107 aa)) are alpha C-terminal domain (alpha-CTD).

The protein belongs to the RNA polymerase alpha chain family. As to quaternary structure, homodimer. The RNAP catalytic core consists of 2 alpha, 1 beta, 1 beta' and 1 omega subunit. When a sigma factor is associated with the core the holoenzyme is formed, which can initiate transcription.

The catalysed reaction is RNA(n) + a ribonucleoside 5'-triphosphate = RNA(n+1) + diphosphate. Its function is as follows. DNA-dependent RNA polymerase catalyzes the transcription of DNA into RNA using the four ribonucleoside triphosphates as substrates. This chain is DNA-directed RNA polymerase subunit alpha, found in Mycobacterium avium (strain 104).